Reading from the N-terminus, the 353-residue chain is uncharacterized protein (353 aa).

The Zn(2+) site is built by cysteine 40, histidine 70, cysteine 100, cysteine 103, cysteine 106, cysteine 114, and cysteine 158.

It belongs to the zinc-containing alcohol dehydrogenase family. The cofactor is Zn(2+).

This is an uncharacterized protein from Escherichia coli (strain K12).